The primary structure comprises 307 residues: Ribonuclease Z (307 aa).

Zn(2+) is bound by residues H63, H65, D67, H68, H141, D212, and H270. D67 serves as the catalytic Proton acceptor.

The protein belongs to the RNase Z family. Homodimer. Zn(2+) serves as cofactor.

The catalysed reaction is Endonucleolytic cleavage of RNA, removing extra 3' nucleotides from tRNA precursor, generating 3' termini of tRNAs. A 3'-hydroxy group is left at the tRNA terminus and a 5'-phosphoryl group is left at the trailer molecule.. Zinc phosphodiesterase, which displays some tRNA 3'-processing endonuclease activity. Probably involved in tRNA maturation, by removing a 3'-trailer from precursor tRNA. The sequence is that of Ribonuclease Z from Bacillus thuringiensis subsp. konkukian (strain 97-27).